An 817-amino-acid chain; its full sequence is Transcription factor yanR (817 aa).

A DNA-binding region (zn(2)-C6 fungal-type) is located at residues 19–46 (CIVCRRRKVRCGREHPECANCVRMKENC). Disordered regions lie at residues 102 to 161 (GNVL…PQVD), 180 to 218 (HHASSRAGTSRTSSVSQDASPAVSESARAPSTSTSYSGL), and 733 to 775 (SLSS…VADS). The segment covering 113–127 (LPRPTISPASAPPPQ) has biased composition (pro residues). Residues 146–158 (SSTILTPAPSSHP) show a composition bias toward polar residues. The segment covering 184-195 (SRAGTSRTSSVS) has biased composition (low complexity). 2 stretches are compositionally biased toward polar residues: residues 208-217 (APSTSTSYSG) and 748-760 (EAPSTTTAPQMPS).

It localises to the nucleus. Transcription factor that regulates the expression of the gene cluster that mediates the biosynthesis of yanuthone D, a fungal isoprenoid epoxycyclohexenone that acts as an antibiotic against fungi and bacteria. The protein is Transcription factor yanR of Aspergillus niger (strain ATCC 1015 / CBS 113.46 / FGSC A1144 / LSHB Ac4 / NCTC 3858a / NRRL 328 / USDA 3528.7).